A 365-amino-acid chain; its full sequence is PR domain zinc finger protein 12 (365 aa).

The SET domain maps to 86–203; that stretch reads VEVIIAQSSI…PDQELLVWYG (118 aa). C2H2-type zinc fingers lie at residues 243-265, 271-293, and 299-323; these read MRCV…MRIH, FVCR…VRLH, and YKCQ…SARH. A disordered region spans residues 318-338; sequence QKSARHRPPSTALQAHSPALP. Positions 329–338 are enriched in low complexity; that stretch reads ALQAHSPALP.

Belongs to the class V-like SAM-binding methyltransferase superfamily. In terms of assembly, interacts with EHMT2.

The protein localises to the nucleus. Its function is as follows. Transcriptional regulator necessary for the development of nociceptive neurons, playing a key role in determining the nociceptive lineage from neural crest cell progenitors. Initiates neurogenesis and activates downstream pro-neuronal transcription factors, such as NEUROD1, BRN3A, and ISL1, specifically within nociceptive neurons, while repressing non-nociceptor cell fates. Essential for the proper function of nociceptors in adults, influencing both their excitability and their gene expression, thereby impacting how these neurons respond to various pain stimuli. The chain is PR domain zinc finger protein 12 (Prdm12) from Mus musculus (Mouse).